Here is a 477-residue protein sequence, read N- to C-terminus: Bifunctional protein HldE (477 aa).

Positions 1-318 (MKVTLPEFER…ENAVRGRADT (318 aa)) are ribokinase. Lys179 carries the post-translational modification N6-acetyllysine. Position 195–198 (195–198 (NLSE)) interacts with ATP. The active site involves Asp264. The tract at residues 344–477 (MTNGVFDILH…IKKIQQDKKG (134 aa)) is cytidylyltransferase.

This sequence in the N-terminal section; belongs to the carbohydrate kinase PfkB family. It in the C-terminal section; belongs to the cytidylyltransferase family. In terms of assembly, homodimer.

It catalyses the reaction D-glycero-beta-D-manno-heptose 7-phosphate + ATP = D-glycero-beta-D-manno-heptose 1,7-bisphosphate + ADP + H(+). It carries out the reaction D-glycero-beta-D-manno-heptose 1-phosphate + ATP + H(+) = ADP-D-glycero-beta-D-manno-heptose + diphosphate. It functions in the pathway nucleotide-sugar biosynthesis; ADP-L-glycero-beta-D-manno-heptose biosynthesis; ADP-L-glycero-beta-D-manno-heptose from D-glycero-beta-D-manno-heptose 7-phosphate: step 1/4. It participates in nucleotide-sugar biosynthesis; ADP-L-glycero-beta-D-manno-heptose biosynthesis; ADP-L-glycero-beta-D-manno-heptose from D-glycero-beta-D-manno-heptose 7-phosphate: step 3/4. In terms of biological role, catalyzes the phosphorylation of D-glycero-D-manno-heptose 7-phosphate at the C-1 position to selectively form D-glycero-beta-D-manno-heptose-1,7-bisphosphate. Its function is as follows. Catalyzes the ADP transfer from ATP to D-glycero-beta-D-manno-heptose 1-phosphate, yielding ADP-D-glycero-beta-D-manno-heptose. This chain is Bifunctional protein HldE, found in Escherichia coli (strain 55989 / EAEC).